The sequence spans 357 residues: tRNA N6-adenosine threonylcarbamoyltransferase (357 aa).

Fe cation contacts are provided by H115 and H119. Substrate-binding positions include 137–141 (LASGG), D170, G183, and N281. Residue D309 participates in Fe cation binding.

This sequence belongs to the KAE1 / TsaD family. Fe(2+) serves as cofactor.

Its subcellular location is the cytoplasm. It catalyses the reaction L-threonylcarbamoyladenylate + adenosine(37) in tRNA = N(6)-L-threonylcarbamoyladenosine(37) in tRNA + AMP + H(+). Functionally, required for the formation of a threonylcarbamoyl group on adenosine at position 37 (t(6)A37) in tRNAs that read codons beginning with adenine. Is involved in the transfer of the threonylcarbamoyl moiety of threonylcarbamoyl-AMP (TC-AMP) to the N6 group of A37, together with TsaE and TsaB. TsaD likely plays a direct catalytic role in this reaction. The protein is tRNA N6-adenosine threonylcarbamoyltransferase of Nitrobacter winogradskyi (strain ATCC 25391 / DSM 10237 / CIP 104748 / NCIMB 11846 / Nb-255).